A 52-amino-acid chain; its full sequence is uncharacterized protein (52 aa).

The stretch at 3–46 forms a coiled coil; sequence KIQLESSNQSVLKLEERRLNLTAEIERIYGQMDLKRKELENANL.

This is an uncharacterized protein from Dictyostelium discoideum (Social amoeba).